Reading from the N-terminus, the 389-residue chain is MADPRDKALQDYRKKLLEHKEIDGRLKELREQLKELTKQYEKSENDLKALQSVGQIVGEVLKQLTEEKFIVKATNGPRYVVGCRRQLDKSKLKPGTRVALDMTTLTIMRYLPREVDPLVYNMSHEDPGNVSYSEIGGLSEQIRELREVIELPLTNPELFQRVGIIPPKGCLLYGPPGTGKTLLARAVASQLDCNFLKVVSSSIVDKYIGESARLIREMFNYARDHQPCIIFMDEIDAIGGRRFSEGTSADREIQRTLMELLNQMDGFDTLHRVKMIMATNRPDTLDPALLRPGRLDRKIHIDLPNEQARLDILKIHAGPITKHGEIDYEAIVKLSDGFNGADLGNVCTEAGMFAIRADHDFVVQEDFMKAVRKVADSKKLESKLDYKPV.

Lys72 carries the post-translational modification N6-acetyllysine. Position 174 to 181 (Gly174 to Thr181) interacts with ATP. N6-acetyllysine is present on Lys206. Ser244 carries the post-translational modification Phosphoserine.

This sequence belongs to the AAA ATPase family. As to quaternary structure, component of the 19S proteasome regulatory particle complex. The 26S proteasome consists of a 20S core particle (CP) and two 19S regulatory subunits (RP). The regulatory particle is made of a lid composed of 9 subunits, a base containing 6 ATPases including PSMC6 and few additional components. Interacts with PAAF1.

It localises to the cytoplasm. The protein resides in the nucleus. Component of the 26S proteasome, a multiprotein complex involved in the ATP-dependent degradation of ubiquitinated proteins. This complex plays a key role in the maintenance of protein homeostasis by removing misfolded or damaged proteins, which could impair cellular functions, and by removing proteins whose functions are no longer required. Therefore, the proteasome participates in numerous cellular processes, including cell cycle progression, apoptosis, or DNA damage repair. PSMC6 belongs to the heterohexameric ring of AAA (ATPases associated with diverse cellular activities) proteins that unfolds ubiquitinated target proteins that are concurrently translocated into a proteolytic chamber and degraded into peptides. The chain is 26S proteasome regulatory subunit 10B (PSMC6) from Bos taurus (Bovine).